We begin with the raw amino-acid sequence, 162 residues long: uncharacterized protein (162 aa).

Residues 7–27 (LGGVMLFAIVSLMVCGCMVVF) form a helical membrane-spanning segment.

The protein localises to the membrane. This is an uncharacterized protein from Methanocaldococcus jannaschii (strain ATCC 43067 / DSM 2661 / JAL-1 / JCM 10045 / NBRC 100440) (Methanococcus jannaschii).